Consider the following 244-residue polypeptide: Cytochrome c1 (244 aa).

An N-terminal signal peptide occupies residues 1–19 (MRKLILATFLLLAPTALLA). Positions 50, 53, and 54 each coordinate heme c. The helical transmembrane segment at 220–240 (YVLLFLGFLFILAYLLKKEYW) threads the bilayer.

In terms of assembly, the main subunits of complex b-c1 are: cytochrome b, cytochrome c1 and the Rieske protein. In terms of processing, binds 1 heme c group covalently per subunit.

It localises to the cell membrane. Functionally, component of the ubiquinol-cytochrome c reductase complex (complex III or cytochrome b-c1 complex), which is a respiratory chain that generates an electrochemical potential coupled to ATP synthesis. c1 functions as an electron donor to cytochrome c. The protein is Cytochrome c1 (petC) of Allochromatium vinosum (strain ATCC 17899 / DSM 180 / NBRC 103801 / NCIMB 10441 / D) (Chromatium vinosum).